Consider the following 953-residue polypeptide: Factor arrest protein 11 (953 aa).

Phosphoserine is present on residues serine 18 and serine 81. Residues 104 to 160 form a disordered region; it reads DIQQDSSDENDNFKFSDDGVNKDRNNEKDNNTDNAVEFQDDAEEAEEENEDESFANV. The segment covering 114–134 has biased composition (basic and acidic residues); it reads DNFKFSDDGVNKDRNNEKDNN. Acidic residues predominate over residues 141–160; that stretch reads FQDDAEEAEEENEDESFANV. Phosphoserine is present on residues serine 524, serine 527, and serine 528.

Belongs to the FAR11 family. As to quaternary structure, component of a complex at least composed of FAR3, FAR7, FAR8, FAR10, FAR11 and VPS64.

Its function is as follows. Participates in the control of the reentry into the cell cycle following pheromone treatment. The polypeptide is Factor arrest protein 11 (FAR11) (Saccharomyces cerevisiae (strain ATCC 204508 / S288c) (Baker's yeast)).